The following is a 589-amino-acid chain: Arginine--tRNA ligase (589 aa).

Positions 123–133 (ANVAKPMHVGH) match the 'HIGH' region motif.

The protein belongs to the class-I aminoacyl-tRNA synthetase family. As to quaternary structure, monomer.

It is found in the cytoplasm. The catalysed reaction is tRNA(Arg) + L-arginine + ATP = L-arginyl-tRNA(Arg) + AMP + diphosphate. This is Arginine--tRNA ligase from Hyphomonas neptunium (strain ATCC 15444).